The chain runs to 2429 residues: Reducing polyketide synthase ppsB (2429 aa).

Positions 4–442 (DERVAIIGTG…GTNAHAILES (439 aa)) constitute a Ketosynthase family 3 (KS3) domain. Catalysis depends on for beta-ketoacyl synthase activity residues C177, H317, and H362. A malonyl-CoA:ACP transacylase (MAT) domain region spans residues 558–873 (VFTGQGAQWP…PYIGLAHRGE (316 aa)). S652 (for acyl/malonyl transferase activity) is an active-site residue. The segment at 945–1075 (HPLLGVLSSE…GRVILALGEA (131 aa)) is N-terminal hotdog fold. The product template (PT) domain stretch occupies residues 945–1227 (HPLLGVLSSE…QLEGIHLTLS (283 aa)). Residues 945-1233 (HPLLGVLSSE…LTLSKPKNSS (289 aa)) form the PKS/mFAS DH domain. The segment at 1090–1233 (SYPMNVDKFY…LTLSKPKNSS (144 aa)) is C-terminal hotdog fold. Residues 1409–2158 (LEVGAGTGSA…ISDLYDQLTS (750 aa)) form a methyltransferase (CMeT) domain region. The Carrier domain occupies 2350 to 2425 (EIILQLFKEK…SMVDEVVKRR (76 aa)). S2385 carries the O-(pantetheine 4'-phosphoryl)serine modification.

Its pathway is secondary metabolite biosynthesis. Its function is as follows. Reducing polyketide synthase; part of the gene cluster that mediates the biosynthesis of 2,4'-dihydroxy-3'-methoxypropiophenone. The first step of the pathway is the conversion of acetate into acetyl-CoA by the acyl-CoA ligase ppsA. Acetyl-CoA is then used as a starter unit by the polyketide synthase ppsB and condensed with 4 malonyl-CoA unit to produce the pentaketide backbone. During polyketide extension, the polykedite chain is probably reduced and dehydrated by the KR and PT domains, respectively. O-methylation seems to be catalyzed by an unknown methyltransferase rather than by the CMeT domain of ppsB. Two hydroxylations and one further decarboxylation step catalyzed by yet unknown enzymes are then required to yield 4'-hydroxy-3'-methoxypropiophenone. PpsC functions as a carrier protein to transport 4'-hydroxy-3'-methoxypropiophenone to a specific cell compartment in which 4'-hydroxy-3'-methoxypropiophenone is hydroxylated to 2,4'-dihydroxy-3'-methoxypropiophenone by a still to be identified enzyme. The sequence is that of Reducing polyketide synthase ppsB from Aspergillus oryzae (strain ATCC 42149 / RIB 40) (Yellow koji mold).